Reading from the N-terminus, the 191-residue chain is Thymidine kinase (191 aa).

ATP contacts are provided by residues 15–22 and 88–91; these read GSMFSGKS and DEVQ. The Proton acceptor role is filled by glutamate 89. Positions 145, 148, 183, and 186 each coordinate Zn(2+).

This sequence belongs to the thymidine kinase family. In terms of assembly, homotetramer.

Its subcellular location is the cytoplasm. The catalysed reaction is thymidine + ATP = dTMP + ADP + H(+). In Macrococcus caseolyticus (strain JCSC5402) (Macrococcoides caseolyticum), this protein is Thymidine kinase.